The sequence spans 568 residues: Potassium-transporting ATPase potassium-binding subunit (568 aa).

Helical transmembrane passes span 6–26, 64–84, 135–155, 179–199, 254–274, 285–305, 382–402, 419–439, 459–481, 488–508, and 529–549; these read ILQI…IGGF, TGYA…TYLI, IALA…AIAF, LYIL…QGVI, LANL…TYTF, WALL…VYPA, GLYG…LMVG, MVML…AAGI, VLYG…SANT, LGIA…AAAG, and LFVT…FFPA.

It belongs to the KdpA family. The system is composed of three essential subunits: KdpA, KdpB and KdpC.

The protein resides in the cell inner membrane. Its function is as follows. Part of the high-affinity ATP-driven potassium transport (or Kdp) system, which catalyzes the hydrolysis of ATP coupled with the electrogenic transport of potassium into the cytoplasm. This subunit binds the periplasmic potassium ions and delivers the ions to the membrane domain of KdpB through an intramembrane tunnel. This is Potassium-transporting ATPase potassium-binding subunit from Solibacter usitatus (strain Ellin6076).